The primary structure comprises 345 residues: AA9 family lytic polysaccharide monooxygenase D (345 aa).

A signal peptide spans 1–21 (MPSFTSKTLLAALAGAAAVNA). Positions 22 and 107 each coordinate Cu(2+). A disulfide bridge connects residues cysteine 77 and cysteine 200. Asparagine 160 carries an N-linked (GlcNAc...) asparagine glycan. O2 is bound by residues histidine 186 and glutamine 195. Tyrosine 197 lines the Cu(2+) pocket. Residues 315–345 (VQTSTRPISTRPQPTRCPGLGRRHLRKVARA) are disordered. The segment covering 318-327 (STRPISTRPQ) has biased composition (polar residues). Positions 335-345 (GRRHLRKVARA) are enriched in basic residues.

This sequence belongs to the polysaccharide monooxygenase AA9 family. The cofactor is Cu(2+).

The protein resides in the secreted. The catalysed reaction is [(1-&gt;4)-beta-D-glucosyl]n+m + reduced acceptor + O2 = 4-dehydro-beta-D-glucosyl-[(1-&gt;4)-beta-D-glucosyl]n-1 + [(1-&gt;4)-beta-D-glucosyl]m + acceptor + H2O.. In terms of biological role, lytic polysaccharide monooxygenase (LPMO) that depolymerizes crystalline and amorphous polysaccharides via the oxidation of scissile alpha- or beta-(1-4)-glycosidic bonds, yielding C1 or C4 oxidation products. Catalysis by LPMOs requires the reduction of the active-site copper from Cu(II) to Cu(I) by a reducing agent and H(2)O(2) or O(2) as a cosubstrate. The sequence is that of AA9 family lytic polysaccharide monooxygenase D from Podospora anserina (strain S / ATCC MYA-4624 / DSM 980 / FGSC 10383) (Pleurage anserina).